The following is a 940-amino-acid chain: Isoleucine--tRNA ligase (940 aa).

A 'HIGH' region motif is present at residues 58–68 (PYANGAIHIGH). E564 lines the L-isoleucyl-5'-AMP pocket. A 'KMSKS' region motif is present at residues 605-609 (KMSKS). ATP is bound at residue K608. Residues C903, C906, C923, and C926 each contribute to the Zn(2+) site.

It belongs to the class-I aminoacyl-tRNA synthetase family. IleS type 1 subfamily. In terms of assembly, monomer. Requires Zn(2+) as cofactor.

Its subcellular location is the cytoplasm. It catalyses the reaction tRNA(Ile) + L-isoleucine + ATP = L-isoleucyl-tRNA(Ile) + AMP + diphosphate. Its function is as follows. Catalyzes the attachment of isoleucine to tRNA(Ile). As IleRS can inadvertently accommodate and process structurally similar amino acids such as valine, to avoid such errors it has two additional distinct tRNA(Ile)-dependent editing activities. One activity is designated as 'pretransfer' editing and involves the hydrolysis of activated Val-AMP. The other activity is designated 'posttransfer' editing and involves deacylation of mischarged Val-tRNA(Ile). The protein is Isoleucine--tRNA ligase of Nitrosococcus oceani (strain ATCC 19707 / BCRC 17464 / JCM 30415 / NCIMB 11848 / C-107).